We begin with the raw amino-acid sequence, 316 residues long: Methionyl-tRNA formyltransferase (316 aa).

Residue 112-115 (SLLP) participates in (6S)-5,6,7,8-tetrahydrofolate binding.

This sequence belongs to the Fmt family.

It carries out the reaction L-methionyl-tRNA(fMet) + (6R)-10-formyltetrahydrofolate = N-formyl-L-methionyl-tRNA(fMet) + (6S)-5,6,7,8-tetrahydrofolate + H(+). Functionally, attaches a formyl group to the free amino group of methionyl-tRNA(fMet). The formyl group appears to play a dual role in the initiator identity of N-formylmethionyl-tRNA by promoting its recognition by IF2 and preventing the misappropriation of this tRNA by the elongation apparatus. The protein is Methionyl-tRNA formyltransferase of Flavobacterium psychrophilum (strain ATCC 49511 / DSM 21280 / CIP 103535 / JIP02/86).